We begin with the raw amino-acid sequence, 402 residues long: Large ribosomal subunit protein uL3 (402 aa).

A disordered region spans residues 1-35; it reads MSHRKFSAPRHGSMGFTPKKRSKRHRGKVKAFPKD. A compositionally biased stretch (basic residues) spans 18–31; that stretch reads PKKRSKRHRGKVKA.

The protein belongs to the universal ribosomal protein uL3 family.

It localises to the cytoplasm. The L3 protein is a component of the large subunit of cytoplasmic ribosomes. In Toxocara canis (Canine roundworm), this protein is Large ribosomal subunit protein uL3 (RPL3).